The primary structure comprises 376 residues: Ribonucleoside-diphosphate reductase 1 subunit beta (376 aa).

Fe cation is bound by residues Asp85, Glu116, and His119. Tyr123 is a catalytic residue. The Fe cation site is built by Glu205, Glu239, and His242.

The protein belongs to the ribonucleoside diphosphate reductase small chain family. Tetramer of two alpha (R1) and two beta (R2) subunits. The B1 protein is a dimer of alpha subunits. A radical transfer pathway occurs between Tyr-123 of R2 and R1. The cofactor is Fe cation.

It carries out the reaction a 2'-deoxyribonucleoside 5'-diphosphate + [thioredoxin]-disulfide + H2O = a ribonucleoside 5'-diphosphate + [thioredoxin]-dithiol. Its function is as follows. Provides the precursors necessary for DNA synthesis. Catalyzes the biosynthesis of deoxyribonucleotides from the corresponding ribonucleotides. R2 contains the tyrosyl radical required for catalysis. This is Ribonucleoside-diphosphate reductase 1 subunit beta (nrdB) from Salmonella typhimurium (strain LT2 / SGSC1412 / ATCC 700720).